Reading from the N-terminus, the 515-residue chain is 2,3-bisphosphoglycerate-independent phosphoglycerate mutase (515 aa).

Mn(2+)-binding residues include Asp-14 and Ser-64. The active-site Phosphoserine intermediate is the Ser-64. Residues His-125, 155–156 (RD), Arg-187, Arg-193, 263–266 (RADR), and Lys-337 contribute to the substrate site. Positions 404, 408, 445, 446, and 464 each coordinate Mn(2+).

Belongs to the BPG-independent phosphoglycerate mutase family. In terms of assembly, monomer. Requires Mn(2+) as cofactor.

The enzyme catalyses (2R)-2-phosphoglycerate = (2R)-3-phosphoglycerate. It functions in the pathway carbohydrate degradation; glycolysis; pyruvate from D-glyceraldehyde 3-phosphate: step 3/5. Functionally, catalyzes the interconversion of 2-phosphoglycerate and 3-phosphoglycerate. The sequence is that of 2,3-bisphosphoglycerate-independent phosphoglycerate mutase from Yersinia pseudotuberculosis serotype O:1b (strain IP 31758).